The sequence spans 96 residues: Small ribosomal subunit protein bS18 (96 aa).

Belongs to the bacterial ribosomal protein bS18 family. In terms of assembly, part of the 30S ribosomal subunit. Forms a tight heterodimer with protein bS6.

In terms of biological role, binds as a heterodimer with protein bS6 to the central domain of the 16S rRNA, where it helps stabilize the platform of the 30S subunit. This chain is Small ribosomal subunit protein bS18, found in Borreliella afzelii (strain PKo) (Borrelia afzelii).